We begin with the raw amino-acid sequence, 473 residues long: Bifunctional protein HldE (473 aa).

Residues 1–318 are ribokinase; the sequence is MKLSMPRFDQ…RAIQREEGSE (318 aa). 194-197 is a binding site for ATP; the sequence is NLSE. The active site involves Asp-263. A cytidylyltransferase region spans residues 343-473; it reads FTNGCFDILH…TAIVEKIRKN (131 aa).

The protein in the N-terminal section; belongs to the carbohydrate kinase PfkB family. This sequence in the C-terminal section; belongs to the cytidylyltransferase family. Homodimer.

It catalyses the reaction D-glycero-beta-D-manno-heptose 7-phosphate + ATP = D-glycero-beta-D-manno-heptose 1,7-bisphosphate + ADP + H(+). It carries out the reaction D-glycero-beta-D-manno-heptose 1-phosphate + ATP + H(+) = ADP-D-glycero-beta-D-manno-heptose + diphosphate. Its pathway is nucleotide-sugar biosynthesis; ADP-L-glycero-beta-D-manno-heptose biosynthesis; ADP-L-glycero-beta-D-manno-heptose from D-glycero-beta-D-manno-heptose 7-phosphate: step 1/4. The protein operates within nucleotide-sugar biosynthesis; ADP-L-glycero-beta-D-manno-heptose biosynthesis; ADP-L-glycero-beta-D-manno-heptose from D-glycero-beta-D-manno-heptose 7-phosphate: step 3/4. In terms of biological role, catalyzes the phosphorylation of D-glycero-D-manno-heptose 7-phosphate at the C-1 position to selectively form D-glycero-beta-D-manno-heptose-1,7-bisphosphate. Functionally, catalyzes the ADP transfer from ATP to D-glycero-beta-D-manno-heptose 1-phosphate, yielding ADP-D-glycero-beta-D-manno-heptose. In Pseudomonas putida (strain GB-1), this protein is Bifunctional protein HldE.